The primary structure comprises 160 residues: 3-dehydroquinate dehydratase (160 aa).

The active-site Proton acceptor is Tyr-22. Asn-73, His-79, and Asp-86 together coordinate substrate. The active-site Proton donor is His-99. Substrate is bound by residues 100–101 (IS) and Arg-110.

The protein belongs to the type-II 3-dehydroquinase family. In terms of assembly, homododecamer.

The enzyme catalyses 3-dehydroquinate = 3-dehydroshikimate + H2O. It functions in the pathway metabolic intermediate biosynthesis; chorismate biosynthesis; chorismate from D-erythrose 4-phosphate and phosphoenolpyruvate: step 3/7. Its function is as follows. Catalyzes a trans-dehydration via an enolate intermediate. The protein is 3-dehydroquinate dehydratase of Sulfurimonas denitrificans (strain ATCC 33889 / DSM 1251) (Thiomicrospira denitrificans (strain ATCC 33889 / DSM 1251)).